The sequence spans 392 residues: 8-amino-7-oxononanoate synthase (392 aa).

A substrate-binding site is contributed by Arg19. Residue 106–107 coordinates pyridoxal 5'-phosphate; sequence GY. His131 provides a ligand contact to substrate. Pyridoxal 5'-phosphate is bound by residues Ser176, His204, and Thr233. The residue at position 236 (Lys236) is an N6-(pyridoxal phosphate)lysine. Position 350 (Thr350) interacts with substrate.

It belongs to the class-II pyridoxal-phosphate-dependent aminotransferase family. BioF subfamily. In terms of assembly, homodimer. Pyridoxal 5'-phosphate serves as cofactor.

It carries out the reaction 6-carboxyhexanoyl-[ACP] + L-alanine + H(+) = (8S)-8-amino-7-oxononanoate + holo-[ACP] + CO2. Its pathway is cofactor biosynthesis; biotin biosynthesis. Its function is as follows. Catalyzes the decarboxylative condensation of pimeloyl-[acyl-carrier protein] and L-alanine to produce 8-amino-7-oxononanoate (AON), [acyl-carrier protein], and carbon dioxide. This chain is 8-amino-7-oxononanoate synthase, found in Pseudomonas fluorescens (strain ATCC BAA-477 / NRRL B-23932 / Pf-5).